The primary structure comprises 193 residues: Selenoprotein S A (193 aa).

A helical transmembrane segment spans residues 29 to 49 (WALASYGWYILFGCIILYFLI). Residues 114–125 (IETWDRMQEGKS) are compositionally biased toward basic and acidic residues. The tract at residues 114 to 193 (IETWDRMQEG…RRGPSSGGUG (80 aa)) is disordered. Residues 137–153 (SPSTSASSSPSTSSSAP) show a composition bias toward low complexity. Sec192 is a non-standard amino acid (selenocysteine).

Belongs to the selenoprotein S family.

It is found in the endoplasmic reticulum membrane. It localises to the cytoplasm. Functionally, involved in the degradation process of misfolded endoplasmic reticulum (ER) luminal proteins. Participates in the transfer of misfolded proteins from the ER to the cytosol, where they are destroyed by the proteasome in a ubiquitin-dependent manner. This is Selenoprotein S A (vimp-a) from Xenopus laevis (African clawed frog).